The primary structure comprises 542 residues: Phosphoacetylglucosamine mutase 2 (542 aa).

Ser77 acts as the Phosphoserine intermediate in catalysis. Ser77 is a binding site for Mg(2+). Phosphoserine is present on residues Ser77 and Ser82. 3 residues coordinate Mg(2+): Asp292, Asp294, and Asp296. Residues 385–387 (EAN), 510–514 (RSSGT), and Arg519 each bind substrate.

The protein belongs to the phosphohexose mutase family. Mg(2+) serves as cofactor.

The protein resides in the cytoplasm. Its subcellular location is the nucleus. The enzyme catalyses N-acetyl-alpha-D-glucosamine 1-phosphate = N-acetyl-D-glucosamine 6-phosphate. The protein operates within nucleotide-sugar biosynthesis; UDP-N-acetyl-alpha-D-glucosamine biosynthesis; N-acetyl-alpha-D-glucosamine 1-phosphate from alpha-D-glucosamine 6-phosphate (route I): step 2/2. Catalyzes the conversion of GlcNAc-6-P into GlcNAc-1-P during the synthesis of uridine diphosphate/UDP-GlcNAc, which is a biosynthetic precursor of chitin and also supplies the amino sugars for N-linked oligosaccharides of glycoproteins. In Schizosaccharomyces pombe (strain 972 / ATCC 24843) (Fission yeast), this protein is Phosphoacetylglucosamine mutase 2.